Reading from the N-terminus, the 753-residue chain is Polyribonucleotide nucleotidyltransferase (753 aa).

Mg(2+) is bound by residues D488 and D494. The KH domain maps to 555–614; sequence PRLLRTKISPDKIGALIGPGGKNIRGIQETTGAVIEVDDEGTVLVASSNKESAQEAMRQV. One can recognise an S1 motif domain in the interval 624–692; it reads GKIYDGTVSS…EHDRVKLSRR (69 aa). Acidic residues predominate over residues 698-719; sequence LGEEDPLAVEGEGGGDSEGGGD. A disordered region spans residues 698–753; it reads LGEEDPLAVEGEGGGDSEGGGDGEDRPRRRRGGSGGGGGGGRGRGPRRSGGGRDRD. Residues 730-740 show a composition bias toward gly residues; that stretch reads GSGGGGGGGRG.

The protein belongs to the polyribonucleotide nucleotidyltransferase family. The cofactor is Mg(2+).

The protein localises to the cytoplasm. The catalysed reaction is RNA(n+1) + phosphate = RNA(n) + a ribonucleoside 5'-diphosphate. Involved in mRNA degradation. Catalyzes the phosphorolysis of single-stranded polyribonucleotides processively in the 3'- to 5'-direction. The protein is Polyribonucleotide nucleotidyltransferase of Rhodopirellula baltica (strain DSM 10527 / NCIMB 13988 / SH1).